Here is a 2768-residue protein sequence, read N- to C-terminus: Thyroglobulin (2768 aa).

An N-terminal signal peptide occupies residues 1–20 (MMTLVLWVSTLLSSVCLVAA). At tyrosine 25 the chain carries Iodotyrosine; alternate. Tyrosine 25 carries the post-translational modification Sulfotyrosine; alternate. Tyrosine 25 bears the Thyroxine; alternate mark. Tyrosine 25 carries the post-translational modification Triiodothyronine; alternate. Thyroglobulin type-1 domains lie at 32-93 (LRPC…PTAC), 94-161 (LSFC…PTRC), 162-298 (PRSC…RFRC), and 299-359 (PTKC…PLFC). Cystine bridges form between cysteine 35–cysteine 53, cysteine 64–cysteine 71, cysteine 73–cysteine 93, cysteine 97–cysteine 121, cysteine 132–cysteine 139, cysteine 141–cysteine 161, cysteine 165–cysteine 184, and cysteine 195–cysteine 236. Tyrosine 109 bears the Iodotyrosine mark. An N-linked (GlcNAc...) asparagine glycan is attached at asparagine 111. Residue tyrosine 150 is modified to Iodotyrosine; alternate. Diiodotyrosine; alternate is present on tyrosine 150. N-linked (GlcNAc...) asparagine glycosylation is present at asparagine 199. 2 positions are modified to iodotyrosine: tyrosine 235 and tyrosine 259. Cystine bridges form between cysteine 302–cysteine 320, cysteine 331–cysteine 337, cysteine 339–cysteine 365, cysteine 408–cysteine 608, cysteine 631–cysteine 636, cysteine 638–cysteine 658, cysteine 662–cysteine 687, and cysteine 698–cysteine 703. N-linked (GlcNAc...) asparagine glycans are attached at residues asparagine 484, asparagine 496, and asparagine 545. Thyroglobulin type-1 domains follow at residues 605-658 (AQAC…HPRC), 659-726 (PTKC…PKLC), 727-922 (PSVC…IPAC), 923-1074 (PGPC…MPQC), 1075-1146 (PTSC…SAQC), and 1147-1211 (PGLC…QPAC). Tyrosine 704 carries the iodotyrosine; alternate modification. Tyrosine 704 is modified (thyroxine; alternate). A Triiodothyronine; alternate modification is found at tyrosine 704. Tyrosine 704 bears the Diiodotyrosine; alternate mark. 16 cysteine pairs are disulfide-bonded: cysteine 705–cysteine 726, cysteine 730–cysteine 763, cysteine 774–cysteine 899, cysteine 901–cysteine 922, cysteine 926–cysteine 1032, cysteine 1043–cysteine 1050, cysteine 1052–cysteine 1074, cysteine 1078–cysteine 1109, cysteine 1127–cysteine 1146, cysteine 1150–cysteine 1170, cysteine 1182–cysteine 1189, cysteine 1191–cysteine 1211, cysteine 1216–cysteine 1265, cysteine 1232–cysteine 1246, cysteine 1306–cysteine 1356, and cysteine 1331–cysteine 1347. Asparagine 748 is a glycosylation site (N-linked (GlcNAc...) asparagine). Iodotyrosine is present on tyrosine 785. N-linked (GlcNAc...) asparagine glycosylation occurs at asparagine 817. At tyrosine 867 the chain carries Iodotyrosine; alternate. Tyrosine 867 is modified (diiodotyrosine; alternate). Residue tyrosine 884 is modified to Diiodotyrosine. N-linked (GlcNAc...) asparagine glycosylation is present at asparagine 948. Tyrosine 993 bears the Iodotyrosine; alternate mark. The residue at position 993 (tyrosine 993) is a Diiodotyrosine; alternate. An N-linked (GlcNAc...) asparagine glycan is attached at asparagine 1017. Residue asparagine 1141 is glycosylated (N-linked (GlcNAc...) asparagine). The residue at position 1310 (tyrosine 1310) is an Iodotyrosine. A Thyroxine modification is found at tyrosine 1310. N-linked (GlcNAc...) asparagine glycans are attached at residues asparagine 1349 and asparagine 1365. Disulfide bonds link cysteine 1441–cysteine 1458, cysteine 1461–cysteine 1472, cysteine 1475–cysteine 1489, cysteine 1492–cysteine 1509, cysteine 1513–cysteine 1522, cysteine 1542–cysteine 1564, cysteine 1602–cysteine 1626, cysteine 1606–cysteine 1612, and cysteine 1638–cysteine 1661. 3 Type II repeats span residues 1455 to 1468 (PLGC…SFSQ), 1469 to 1485 (DGKC…GQAG), and 1486 to 1502 (SSAC…TITG). One can recognise a Thyroglobulin type-1 11 domain in the interval 1510 to 1564 (VTDCQRDEAGLQCDQNGQYQANQKDMDSGEVFCVDSEGQRLQWLQTEAGLSESQC). Residues 1602–1722 (CLADCADDEA…GTNLTDTHLF (121 aa)) form a Type IIIA repeat. N-linked (GlcNAc...) asparagine glycosylation is present at asparagine 1715. 4 disulfides stabilise this stretch: cysteine 1723–cysteine 1748, cysteine 1727–cysteine 1733, cysteine 1732–cysteine 1834, and cysteine 1759–cysteine 1776. The stretch at 1723–1891 (CLLACDQDSC…LFSAEQANLW (169 aa)) is one Type IIIB repeat. Asparagine 1773 and asparagine 1866 each carry an N-linked (GlcNAc...) asparagine glycan. 7 cysteine pairs are disulfide-bonded: cysteine 1892–cysteine 1918, cysteine 1896–cysteine 1903, cysteine 1927–cysteine 1938, cysteine 1995–cysteine 2023, cysteine 1999–cysteine 2005, cysteine 2004–cysteine 2075, and cysteine 2034–cysteine 2047. The stretch at 1892 to 1994 (CLSRCAQEPV…EKLISNGFFE (103 aa)) is one Type IIIA repeat. N-linked (GlcNAc...) asparagine glycosylation occurs at asparagine 1937. The stretch at 1995–2127 (CERLCDRDPC…SATRNFSLAQ (133 aa)) is one Type IIIB repeat. Residue asparagine 2012 is glycosylated (N-linked (GlcNAc...) asparagine). An N-linked (GlcNAc...) asparagine glycan is attached at asparagine 2122. The stretch at 2128 to 2185 (DFCLQECSRHQDCLVTTLQIQQGVVRCVFYPDIQSCEHSLRSKTCWLLLHEEAAYIYR) is one Type IIIA repeat. Disulfide bonds link cysteine 2130–cysteine 2154, cysteine 2134–cysteine 2140, and cysteine 2163–cysteine 2172. Tyrosine 2184 carries the iodotyrosine modification. The tract at residues 2188-2768 (GAPLHQSDGI…LEPVPKSYSK (581 aa)) is cholinesterase-like (ChEL). Asparagine 2251 carries an N-linked (GlcNAc...) asparagine glycan. A disulfide bond links cysteine 2265 and cysteine 2282. 2 N-linked (GlcNAc...) asparagine glycosylation sites follow: asparagine 2296 and asparagine 2445. The cysteines at positions 2443 and 2454 are disulfide-linked. Tyrosine 2541 is modified (thyroxine). Tyrosine 2574 bears the Iodotyrosine; alternate mark. Residue tyrosine 2574 is modified to Thyroxine; alternate. Tyrosine 2574 bears the Triiodothyronine; alternate mark. Tyrosine 2574 is subject to Diiodotyrosine; alternate. The N-linked (GlcNAc...) asparagine glycan is linked to asparagine 2583. Tyrosine 2588 and tyrosine 2618 each carry iodotyrosine. Cysteine 2592 and cysteine 2716 form a disulfide bridge. Tyrosine 2698 carries the diiodotyrosine modification. The disordered stretch occupies residues 2731 to 2768 (GAKDAQLTKSGEEDLEVGPGSEEDFSGSLEPVPKSYSK). Residues 2743–2755 (EDLEVGPGSEEDF) show a composition bias toward acidic residues. An Iodotyrosine; alternate modification is found at tyrosine 2766. A Thyroxine; alternate modification is found at tyrosine 2766. A Triiodothyronine; alternate modification is found at tyrosine 2766. Tyrosine 2766 carries the diiodotyrosine; alternate modification.

This sequence belongs to the type-B carboxylesterase/lipase family. In terms of assembly, monomer. Homodimer (via ChEL region); occurs in the endoplasmic reticulum and is required for export to the Golgi apparatus. Homooligomer; disulfide-linked; stored in this form in the thyroid follicle lumen. Iodinated on tyrosine residues by TPO. There are 4 pairs of iodinated tyrosines used for coupling: acceptor Tyr-25 is coupled to donor Tyr-150 or Tyr-235, acceptor Tyr-2574 is coupled to donor Tyr-2541, acceptor Tyr-2766 in monomer 1 is coupled to donor Tyr-2766 in monomer 2 and acceptor Tyr-1310 in monomer 1 is coupled to donor Tyr-109 in monomer 2. In terms of processing, sulfated tyrosines are desulfated during iodination. Post-translationally, undergoes sequential proteolysis by cathepsins to release thyroxine (T4) and triiodothyronine (T3) hormones. In the thyroid follicle lumen, cross-linked TG (storage form) is solubilized by limited proteolysis mediated by cathepsins CTSB and/or CTSL. Partially cleaved TG is further processed by CTSK/cathepsin K and/or CTSL resulting in the release of thyroxine (T4). Following endocytosis, further processing occurs leading to the release of triiodothyronine (T3) and more T4 hormones. Specifically expressed in the thyroid gland.

The protein localises to the secreted. Functionally, acts as a substrate for the production of iodinated thyroid hormones thyroxine (T4) and triiodothyronine (T3). The synthesis of T3 and T4 involves iodination of selected tyrosine residues of TG/thyroglobulin followed by their oxidative coupling. Following TG re-internalization and lysosomal-mediated proteolysis, T3 and T4 are released from the polypeptide backbone leading to their secretion into the bloodstream. One dimer produces 7 thyroid hormone molecules. The chain is Thyroglobulin (Tg) from Rattus norvegicus (Rat).